Reading from the N-terminus, the 358-residue chain is Peptide chain release factor 1 (358 aa).

Q233 is subject to N5-methylglutamine.

This sequence belongs to the prokaryotic/mitochondrial release factor family. In terms of processing, methylated by PrmC. Methylation increases the termination efficiency of RF1.

Its subcellular location is the cytoplasm. Its function is as follows. Peptide chain release factor 1 directs the termination of translation in response to the peptide chain termination codons UAG and UAA. This chain is Peptide chain release factor 1, found in Staphylococcus epidermidis (strain ATCC 35984 / DSM 28319 / BCRC 17069 / CCUG 31568 / BM 3577 / RP62A).